The following is a 306-amino-acid chain: Homoserine kinase (306 aa).

Position 90–100 (90–100 (PLARGLGSSAS)) interacts with ATP.

Belongs to the GHMP kinase family. Homoserine kinase subfamily.

The protein resides in the cytoplasm. The catalysed reaction is L-homoserine + ATP = O-phospho-L-homoserine + ADP + H(+). Its pathway is amino-acid biosynthesis; L-threonine biosynthesis; L-threonine from L-aspartate: step 4/5. In terms of biological role, catalyzes the ATP-dependent phosphorylation of L-homoserine to L-homoserine phosphate. This chain is Homoserine kinase, found in Staphylococcus epidermidis (strain ATCC 12228 / FDA PCI 1200).